A 350-amino-acid polypeptide reads, in one-letter code: Glycerol-1-phosphate dehydrogenase [NAD(P)+] (350 aa).

NAD(+) contacts are provided by residues 97–101 (GSIID) and 119–122 (TTAS). Substrate is bound at residue Asp124. NAD(+) is bound at residue Ser128. Asp171 is a substrate binding site. 2 residues coordinate Zn(2+): Asp171 and His251. His255 lines the substrate pocket. Position 267 (His267) interacts with Zn(2+).

This sequence belongs to the glycerol-1-phosphate dehydrogenase family. Zn(2+) is required as a cofactor.

The protein resides in the cytoplasm. The enzyme catalyses sn-glycerol 1-phosphate + NAD(+) = dihydroxyacetone phosphate + NADH + H(+). It carries out the reaction sn-glycerol 1-phosphate + NADP(+) = dihydroxyacetone phosphate + NADPH + H(+). The protein operates within membrane lipid metabolism; glycerophospholipid metabolism. Catalyzes the NAD(P)H-dependent reduction of dihydroxyacetonephosphate (DHAP or glycerone phosphate) to glycerol 1-phosphate (G1P). The G1P thus generated is used as the glycerophosphate backbone of phospholipids in the cellular membranes of Archaea. The sequence is that of Glycerol-1-phosphate dehydrogenase [NAD(P)+] from Thermococcus sibiricus (strain DSM 12597 / MM 739).